Here is a 557-residue protein sequence, read N- to C-terminus: Urocanate hydratase (557 aa).

The interval 1–20 (MSNPRHNEREVRSPRGDELN) is disordered. NAD(+) is bound by residues 52–53 (GG), Q130, 176–178 (GMG), E196, R201, 242–243 (NA), 263–267 (QTSAH), 273–274 (YL), and Y322. C410 is a catalytic residue. G492 lines the NAD(+) pocket.

This sequence belongs to the urocanase family. NAD(+) serves as cofactor.

The protein resides in the cytoplasm. The enzyme catalyses 4-imidazolone-5-propanoate = trans-urocanate + H2O. The protein operates within amino-acid degradation; L-histidine degradation into L-glutamate; N-formimidoyl-L-glutamate from L-histidine: step 2/3. In terms of biological role, catalyzes the conversion of urocanate to 4-imidazolone-5-propionate. The protein is Urocanate hydratase of Brucella anthropi (strain ATCC 49188 / DSM 6882 / CCUG 24695 / JCM 21032 / LMG 3331 / NBRC 15819 / NCTC 12168 / Alc 37) (Ochrobactrum anthropi).